Consider the following 311-residue polypeptide: MTGDVRRLPDGHAAPALNPLTGIKLVVLTGLSGAGRSTAAKCLEDLGWFVVDNLPPGLLDTMVDLGVRSGGAINKIAAVVDVRSRAFTSDLYGALGVLRNRGTALRIVFLEASDDELIRRFENVRRPHPLQGDGRLADGIARERELLRDVRGVADLVIDTTNLNVHELRGKIIAAFSDDNQPALRATVVSFGYKYGLPADADLVVDCRFLPNPHWVDELRPLTGRDDAVREYVLAQPGAQDFLDTYSKVLGTVVDGYLREGKRYLTLAVGCTGGKHRSVVIAEELAERLRRLATAESRIDVQVAHRDLGRE.

Position 30–37 (glycine 30–serine 37) interacts with ATP. GTP is bound at residue aspartate 81–serine 84.

This sequence belongs to the RapZ-like family.

In terms of biological role, displays ATPase and GTPase activities. The protein is Nucleotide-binding protein Acel_1111 of Acidothermus cellulolyticus (strain ATCC 43068 / DSM 8971 / 11B).